Consider the following 69-residue polypeptide: Large ribosomal subunit protein bL31 (69 aa).

Cysteine 16, cysteine 18, cysteine 37, and cysteine 40 together coordinate Zn(2+).

Belongs to the bacterial ribosomal protein bL31 family. Type A subfamily. Part of the 50S ribosomal subunit. It depends on Zn(2+) as a cofactor.

Its function is as follows. Binds the 23S rRNA. In Syntrophotalea carbinolica (strain DSM 2380 / NBRC 103641 / GraBd1) (Pelobacter carbinolicus), this protein is Large ribosomal subunit protein bL31.